The following is a 437-amino-acid chain: Chromosomal replication initiator protein DnaA (437 aa).

The tract at residues 1 to 72 (MEQFNAFKSL…ESLYEGIKSV (72 aa)) is domain I, interacts with DnaA modulators. The segment at 72-99 (VNFVNEQDFFFNLAKLEENSRDTLYQNS) is domain II. Residues 100 to 320 (GLSKNYTFQN…GIATKLLFFA (221 aa)) are domain III, AAA+ region. Gly144, Gly146, Lys147, and Thr148 together coordinate ATP. The segment at 321 to 437 (KTSKQNLINT…LRDVITSLVI (117 aa)) is domain IV, binds dsDNA.

The protein belongs to the DnaA family. In terms of assembly, oligomerizes as a right-handed, spiral filament on DNA at oriC.

It is found in the cytoplasm. Plays an essential role in the initiation and regulation of chromosomal replication. ATP-DnaA binds to the origin of replication (oriC) to initiate formation of the DNA replication initiation complex once per cell cycle. Binds the DnaA box (a 9 base pair repeat at the origin) and separates the double-stranded (ds)DNA. Forms a right-handed helical filament on oriC DNA; dsDNA binds to the exterior of the filament while single-stranded (ss)DNA is stabiized in the filament's interior. The ATP-DnaA-oriC complex binds and stabilizes one strand of the AT-rich DNA unwinding element (DUE), permitting loading of DNA polymerase. After initiation quickly degrades to an ADP-DnaA complex that is not apt for DNA replication. Binds acidic phospholipids. The protein is Chromosomal replication initiator protein DnaA of Mycoplasma genitalium (strain ATCC 33530 / DSM 19775 / NCTC 10195 / G37) (Mycoplasmoides genitalium).